The following is a 95-amino-acid chain: Cliotide T1 (95 aa).

The segment at residues 1-30 (GIPCGESCVFIPCITGAIGCSCKSKVCYRN) is a cross-link (cyclopeptide (Gly-Asn)). Intrachain disulfides connect Cys-4–Cys-20, Cys-8–Cys-22, and Cys-13–Cys-27. Residues 31 to 95 (HVIAAEAKTM…KDHLKMSITN (65 aa)) constitute a propeptide, removed in mature form.

In terms of processing, contains 3 disulfide bonds. Post-translationally, this is a cyclic peptide. As to expression, expressed in flower, stem, shoot, root, leaf, seed, pod and nodule (at protein level).

In terms of biological role, probably participates in a plant defense mechanism. Active against Gram-negative bacteria E.coli ATCC 700926 (MIC=1.1 uM), K.pneumoniae ATTC 13883 (MIC=2.7 uM) and P.aeruginosa ATCC 39018 (MIC=4.7 uM). Has hemolytic and cytotoxic activity. The polypeptide is Cliotide T1 (Clitoria ternatea (Butterfly pea)).